Reading from the N-terminus, the 288-residue chain is Syntaxin-1A (288 aa).

A compositionally biased stretch (basic and acidic residues) spans 1–13; the sequence is MKDRTQELRTAKD. The tract at residues 1–20 is disordered; sequence MKDRTQELRTAKDSDDDDDV. The Cytoplasmic portion of the chain corresponds to 1–265; the sequence is MKDRTQELRT…KYQSKARRKK (265 aa). Phosphoserine is present on residues serine 14, serine 64, and serine 95. Positions 68–109 form a coiled coil; it reads DEKTKEELEELMSDIKKTANKVRSKLKSIEQSIEQEEGLNRS. Serine 188 is subject to Phosphoserine; by DAPK1. The t-SNARE coiled-coil homology domain occupies 192–254; sequence LSEIETRHSE…ERAVSDTKKA (63 aa). Glycyl lysine isopeptide (Lys-Gly) (interchain with G-Cter in SUMO) cross-links involve residues lysine 252, lysine 253, and lysine 256. Residues 266–288 traverse the membrane as a helical; Anchor for type IV membrane protein segment; the sequence is IMIVICCVVLGIVIASTFGGIFG.

The protein belongs to the syntaxin family. Part of the SNARE core complex containing SNAP25, VAMP2 and STX1A; this complex constitutes the basic catalytic machinery of the complex neurotransmitter release apparatus. The SNARE complex interacts with CPLX1. Interacts with STXBP1. The interaction with STXBP1 promotes assembly of the SNARE complex. Interacts (via C-terminus) with KCNB1 (via C-terminus); the interaction increases in a calcium-dependent manner and induces a pore-independent enhancement of exocytosis in neuroendocrine cells, chromaffin cells, pancreatic beta cells and from the soma of dorsal root ganglia (DRG) neurons. Interacts with SYTL4. Interacts with STXBP6. Interacts with PLCL1 (via C2 domain). Interacts with OTOF. Interacts with LGI3. Interacts (via the H3 domain) with SLC6A4 (via the N-terminus); this interaction regulates SLC4A6 channel conductance in thalamocortical neurons. Interacts with SYT6 and SYT8; the interaction is Ca(2+)-dependent. Interacts with VAMP8. Interacts with SNAP23. Interacts with VAPA and SYBU. Interacts with PRRT2. Interacts with SEPT8. Interacts with STXBP5L. Interacts with synaptotagmin-1/SYT1. Interacts with SEPTIN5; in the cerebellar cortex. Interacts with SEPTIN4; in the striatum. In terms of processing, phosphorylated by CK2. Phosphorylation at Ser-188 by DAPK1 significantly decreases its interaction with STXBP1. Post-translationally, sumoylated, sumoylation is required for regulation of synaptic vesicle endocytosis. (Microbial infection) Targeted and hydrolyzed by C.botulinum neurotoxin type C (BoNT/C) which inhibits neurotransmitter release. Probably hydrolyzes the 253-Lys-|-Ala-254 bond.

It localises to the cytoplasmic vesicle. The protein localises to the secretory vesicle. Its subcellular location is the synaptic vesicle membrane. It is found in the synapse. The protein resides in the synaptosome. It localises to the cell membrane. Its function is as follows. Plays an essential role in hormone and neurotransmitter calcium-dependent exocytosis and endocytosis. Part of the SNARE (Soluble NSF Attachment Receptor) complex composed of SNAP25, STX1A and VAMP2 which mediates the fusion of synaptic vesicles with the presynaptic plasma membrane. STX1A and SNAP25 are localized on the plasma membrane while VAMP2 resides in synaptic vesicles. The pairing of the three SNAREs from the N-terminal SNARE motifs to the C-terminal anchors leads to the formation of the SNARE complex, which brings membranes into close proximity and results in final fusion. Participates in the calcium-dependent regulation of acrosomal exocytosis in sperm. Also plays an important role in the exocytosis of hormones such as insulin or glucagon-like peptide 1 (GLP-1). This chain is Syntaxin-1A (STX1A), found in Bos taurus (Bovine).